The chain runs to 35 residues: Coenzyme PQQ synthesis protein A (35 aa).

The pyrroloquinoline quinone (Glu-Tyr) cross-link spans 16 to 20; the sequence is EINMY.

This sequence belongs to the PqqA family.

Its pathway is cofactor biosynthesis; pyrroloquinoline quinone biosynthesis. Functionally, required for coenzyme pyrroloquinoline quinone (PQQ) biosynthesis. PQQ is probably formed by cross-linking a specific glutamate to a specific tyrosine residue and excising these residues from the peptide. In Roseobacter denitrificans (strain ATCC 33942 / OCh 114) (Erythrobacter sp. (strain OCh 114)), this protein is Coenzyme PQQ synthesis protein A.